The sequence spans 111 residues: Nucleoid-associated protein Tmel_0542 (111 aa).

The protein belongs to the YbaB/EbfC family. In terms of assembly, homodimer.

It is found in the cytoplasm. Its subcellular location is the nucleoid. In terms of biological role, binds to DNA and alters its conformation. May be involved in regulation of gene expression, nucleoid organization and DNA protection. The polypeptide is Nucleoid-associated protein Tmel_0542 (Thermosipho melanesiensis (strain DSM 12029 / CIP 104789 / BI429)).